A 434-amino-acid chain; its full sequence is Methylenetetrahydrofolate--tRNA-(uracil-5-)-methyltransferase TrmFO (434 aa).

Residue 9-14 (GAGLAG) coordinates FAD.

This sequence belongs to the MnmG family. TrmFO subfamily. The cofactor is FAD.

The protein localises to the cytoplasm. The enzyme catalyses uridine(54) in tRNA + (6R)-5,10-methylene-5,6,7,8-tetrahydrofolate + NADH + H(+) = 5-methyluridine(54) in tRNA + (6S)-5,6,7,8-tetrahydrofolate + NAD(+). It carries out the reaction uridine(54) in tRNA + (6R)-5,10-methylene-5,6,7,8-tetrahydrofolate + NADPH + H(+) = 5-methyluridine(54) in tRNA + (6S)-5,6,7,8-tetrahydrofolate + NADP(+). Its function is as follows. Catalyzes the folate-dependent formation of 5-methyl-uridine at position 54 (M-5-U54) in all tRNAs. The chain is Methylenetetrahydrofolate--tRNA-(uracil-5-)-methyltransferase TrmFO from Bacillus licheniformis (strain ATCC 14580 / DSM 13 / JCM 2505 / CCUG 7422 / NBRC 12200 / NCIMB 9375 / NCTC 10341 / NRRL NRS-1264 / Gibson 46).